The sequence spans 106 residues: DNA-directed RNA polymerase subunit omega (106 aa).

The disordered stretch occupies residues 76-106; the sequence is REPAREAAEPAGEAPEEQQRAAGEREDQGAA. Residues 92–106 are compositionally biased toward basic and acidic residues; that stretch reads EQQRAAGEREDQGAA.

The protein belongs to the RNA polymerase subunit omega family. As to quaternary structure, the RNAP catalytic core consists of 2 alpha, 1 beta, 1 beta' and 1 omega subunit. When a sigma factor is associated with the core the holoenzyme is formed, which can initiate transcription.

The enzyme catalyses RNA(n) + a ribonucleoside 5'-triphosphate = RNA(n+1) + diphosphate. Promotes RNA polymerase assembly. Latches the N- and C-terminal regions of the beta' subunit thereby facilitating its interaction with the beta and alpha subunits. The chain is DNA-directed RNA polymerase subunit omega from Rubrobacter xylanophilus (strain DSM 9941 / JCM 11954 / NBRC 16129 / PRD-1).